Here is a 181-residue protein sequence, read N- to C-terminus: 30 kDa heat shock protein (181 aa).

Residues 33–181 form the sHSP domain; it reads ASVQSFAPRF…PPTAKKITIQ (149 aa). Positions 79–115 are enriched in basic and acidic residues; sequence GRSEREYHSSSDDNKNDQADTENQARGESSEVAKTGE. The segment at 79–127 is disordered; it reads GRSEREYHSSSDDNKNDQADTENQARGESSEVAKTGEKQVSTKKAANKS.

Belongs to the small heat shock protein (HSP20) family.

The sequence is that of 30 kDa heat shock protein (hsp30) from Emericella nidulans (strain FGSC A4 / ATCC 38163 / CBS 112.46 / NRRL 194 / M139) (Aspergillus nidulans).